The sequence spans 466 residues: Ribosomal protein uS12 methylthiotransferase RimO (466 aa).

The MTTase N-terminal domain maps to 15-125 (PKVGFVSLGC…VMEAVHAALP (111 aa)). Positions 24, 60, 89, 156, 160, and 163 each coordinate [4Fe-4S] cluster. In terms of domain architecture, Radical SAM core spans 142–380 (LTPRHYAYLK…AKQAEISALR (239 aa)). Residues 382–450 (EAKIGSVQQC…EHDLFGDALP (69 aa)) form the TRAM domain.

Belongs to the methylthiotransferase family. RimO subfamily. It depends on [4Fe-4S] cluster as a cofactor.

It localises to the cytoplasm. The enzyme catalyses L-aspartate(89)-[ribosomal protein uS12]-hydrogen + (sulfur carrier)-SH + AH2 + 2 S-adenosyl-L-methionine = 3-methylsulfanyl-L-aspartate(89)-[ribosomal protein uS12]-hydrogen + (sulfur carrier)-H + 5'-deoxyadenosine + L-methionine + A + S-adenosyl-L-homocysteine + 2 H(+). Catalyzes the methylthiolation of an aspartic acid residue of ribosomal protein uS12. This chain is Ribosomal protein uS12 methylthiotransferase RimO, found in Xanthomonas oryzae pv. oryzae (strain MAFF 311018).